The following is a 631-amino-acid chain: Vacuolar-sorting receptor 6 (631 aa).

Positions 1–25 are cleaved as a signal peptide; sequence MSLIHKGATLALFLALTMVVNGVFG. The Lumenal portion of the chain corresponds to 26–563; that stretch reads RFIVEKSSVT…CIERSGSRIG (538 aa). The PA domain occupies 57-165; sequence NYGGYMIGSV…SFANTLKQAL (109 aa). Asparagine 294 and asparagine 431 each carry an N-linked (GlcNAc...) asparagine glycan. EGF-like domains follow at residues 413–463 and 494–540; these read ETNE…TSCE and ETSG…FECK. Disulfide bonds link cysteine 417-cysteine 435, cysteine 424-cysteine 444, cysteine 446-cysteine 462, cysteine 498-cysteine 511, and cysteine 530-cysteine 539. A helical membrane pass occupies residues 564–584; it reads WFPTFVILAAVASICVGGYVF. The Cytoplasmic segment spans residues 585–631; sequence YKYRLRSYMDSEIMAIMSQYMPLESQNTTDPMTGESQHQQLRLTSAA. The Tyrosine-based internalization motif signature appears at 604–607; the sequence is YMPL. The tract at residues 610 to 631 is disordered; that stretch reads QNTTDPMTGESQHQQLRLTSAA.

The protein belongs to the VSR (BP-80) family. In terms of tissue distribution, expressed in seedlings, roots, leaves, flowers and siliques.

The protein localises to the membrane. The protein resides in the golgi apparatus membrane. It localises to the cytoplasmic vesicle. Its subcellular location is the clathrin-coated vesicle membrane. It is found in the prevacuolar compartment membrane. Vacuolar-sorting receptor (VSR) involved in clathrin-coated vesicles sorting from Golgi apparatus to vacuoles. The chain is Vacuolar-sorting receptor 6 (VSR6) from Arabidopsis thaliana (Mouse-ear cress).